A 424-amino-acid chain; its full sequence is Endoglucanase 1 (424 aa).

An N-terminal signal peptide occupies residues 1–18 (MAKFSALCSLALLGLATA). 9 disulfides stabilise this stretch: Cys35–Cys41, Cys68–Cys90, Cys80–Cys86, Cys156–Cys384, Cys188–Cys211, Cys192–Cys210, Cys231–Cys250, Cys239–Cys244, and Cys255–Cys331. Asn76 carries N-linked (GlcNAc...) asparagine glycosylation. Catalysis depends on Glu213, which acts as the Nucleophile. Glu218 functions as the Proton donor in the catalytic mechanism. N-linked (GlcNAc...) asparagine glycans are attached at residues Asn271 and Asn385.

The protein belongs to the glycosyl hydrolase 7 (cellulase C) family. Monomer.

It localises to the secreted. The catalysed reaction is Endohydrolysis of (1-&gt;4)-beta-D-glucosidic linkages in cellulose, lichenin and cereal beta-D-glucans.. Its function is as follows. Endoglucanase that is involved in the biological conversion of cellulose to glucose. Hydrolyzes internal beta-1,4-glucosidic bonds. The protein is Endoglucanase 1 of Pyricularia oryzae (strain 70-15 / ATCC MYA-4617 / FGSC 8958) (Rice blast fungus).